A 399-amino-acid polypeptide reads, in one-letter code: Probable inactive 2-oxoglutarate-dependent dioxygenase AOP2 (399 aa).

Residues 248–345 (GGDDVEANDD…RYTAAIFTCP (98 aa)) form the Fe2OG dioxygenase domain. Fe cation is bound by residues His-268, Asp-270, and His-325. Arg-336 provides a ligand contact to 2-oxoglutarate.

The protein belongs to the iron/ascorbate-dependent oxidoreductase family. The cofactor is Fe(2+).

The sequence is that of Probable inactive 2-oxoglutarate-dependent dioxygenase AOP2 (AOP2) from Arabidopsis thaliana (Mouse-ear cress).